We begin with the raw amino-acid sequence, 481 residues long: uncharacterized protein (481 aa).

A run of 11 helical transmembrane segments spans residues 14-34 (LGFC…GIFL), 46-66 (FAPM…IVFA), 90-110 (IGIY…GVLA), 134-154 (FSVK…INLF), 167-187 (TVGK…IITT), 218-238 (FSSM…FESI), 258-278 (IAIF…MLLG), 303-323 (IIVV…SFGA), 377-397 (LAVI…IALA), 411-431 (AFTD…LAVS), and 446-466 (YFSI…AYLH).

The protein belongs to the amino acid-polyamine-organocation (APC) superfamily.

Its subcellular location is the cell membrane. In terms of biological role, probable amino-acid or metabolite transport protein. This is an uncharacterized protein from Mycobacterium tuberculosis (strain CDC 1551 / Oshkosh).